The primary structure comprises 193 residues: Interleukin-23 subunit alpha (193 aa).

A signal peptide spans 1–22 (MLGSRAVMLMLLLLLLPWTSQG).

This sequence belongs to the IL-6 superfamily. As to quaternary structure, heterodimer with IL12B; disulfide-linked. The heterodimer is known as interleukin IL-23. Interacts with IL23R; this interaction enables recruitment of IL12RB1.

The protein localises to the secreted. Functionally, associates with IL12B to form the pro-inflammatory cytokine IL-23 that plays different roles in innate and adaptive immunity. Released by antigen-presenting cells such as dendritic cells or macrophages, binds to a heterodimeric receptor complex composed of IL12RB1 and IL23R to activate JAK2 and TYK2 which then phosphorylate the receptor to form a docking site leading to the phosphorylation of STAT3 and STAT4. This process leads to activation of several pathways including p38 MAPK or NF-kappa-B and promotes the production of pro-inflammatory cytokines such as interleukin-17A/IL17A. In turn, participates in the early and effective intracellular bacterial clearance. Promotes the expansion and survival of T-helper 17 cells, a CD4-positive helper T-cell subset that produces IL-17, as well as other IL-17-producing cells. The sequence is that of Interleukin-23 subunit alpha (IL23A) from Sus scrofa (Pig).